Reading from the N-terminus, the 122-residue chain is Putative ankyrin repeat protein L22 (122 aa).

ANK repeat units lie at residues 3-32, 33-62, 63-92, and 94-122; these read DNNYAVRLASRNGYIEVVKYLVSIGADIKA, DDDYAVKWASRYGHLRVVKFLVSQGADIRV, NNDYAVQLASENGHFDVVKYLVSQDANIRA, and DDYAVKLASVNGHVEVVKYLVSQGAVLNQ.

The chain is Putative ankyrin repeat protein L22 from Acanthamoeba polyphaga (Amoeba).